The primary structure comprises 123 residues: Small ribosomal subunit protein uS12cz/uS12cy (123 aa).

The protein belongs to the universal ribosomal protein uS12 family. As to quaternary structure, part of the 30S ribosomal subunit.

The protein localises to the plastid. It localises to the chloroplast. Its function is as follows. With S4 and S5 plays an important role in translational accuracy. Located at the interface of the 30S and 50S subunits. The chain is Small ribosomal subunit protein uS12cz/uS12cy (rps12-A) from Psilotum nudum (Whisk fern).